The chain runs to 477 residues: Solute carrier family 2, facilitated glucose transporter member 8 (477 aa).

The Cytoplasmic portion of the chain corresponds to 1–25 (MSPEDPQETQPLLRPPEARTPRGRR). The Dileucine internalization motif motif lies at 12-13 (LL). A helical transmembrane segment spans residues 26–46 (VFLASFAAALGPLSFGFALGY). At 47–70 (SSPAIPSLRRTAPPALRLGDNAAS) the chain is on the extracellular side. The chain crosses the membrane as a helical span at residues 71-91 (WFGAVVTLGAAAGGILGGWLL). Over 92-96 (DRAGR) the chain is Cytoplasmic. Residues 97–117 (KLSLLLCTVPFVTGFAVITAA) traverse the membrane as a helical segment. The Extracellular portion of the chain corresponds to 118–127 (RDVWMLLGGR). A helical membrane pass occupies residues 128-148 (LLTGLACGVASLVAPVYISEI). Residues 149-156 (AYPAVRGL) are Cytoplasmic-facing. The helical transmembrane segment at 157 to 177 (LGSCVQLMVVTGILLAYVAGW) threads the bilayer. D-glucose is bound at residue Gln-162. Residues 178-182 (VLEWR) are Extracellular-facing. Residues 183–203 (WLAVLGCVPPTLMLLLMCYMP) form a helical membrane-spanning segment. At 204 to 257 (ETPRFLLTQHQYQEAMAALRFLWGSEEGWEEPPVGAEHQGFQLALLRRPGIYKP) the chain is on the cytoplasmic side. The chain crosses the membrane as a helical span at residues 258 to 278 (LIIGISLMVFQQLSGVNAIMF). D-glucose is bound by residues 268–269 (QQ) and Asn-274. Residues 279-293 (YANSIFEEAKFKDSS) lie on the Extracellular side of the membrane. A helical membrane pass occupies residues 294–314 (LASVTVGIIQVLFTAVAALIM). Residues 315–320 (DRAGRR) are Cytoplasmic-facing. Residues 321–341 (LLLALSGVIMVFSMSAFGTYF) form a helical membrane-spanning segment. Topologically, residues 342-367 (KLTQSLPSNSSHVGLVPIAAEPVDVQ) are extracellular. Residue Asn-350 is glycosylated (N-linked (GlcNAc...) asparagine). A helical transmembrane segment spans residues 368–388 (VGLAWLAVGSMCLFIAGFAVG). The Cytoplasmic segment spans residues 389–404 (WGPIPWLLMSEIFPLH). Trp-394 lines the D-glucose pocket. A helical transmembrane segment spans residues 405–425 (VKGVATGICVLTNWFMAFLVT). Residues 426–438 (KEFSSVMEMLRPY) are Extracellular-facing. The helical transmembrane segment at 439–459 (GAFWLTAAFCALSVLFTLTVV) threads the bilayer. Residues 460–477 (PETKGRTLEQVTAHFEGR) are Cytoplasmic-facing.

The protein belongs to the major facilitator superfamily. Sugar transporter (TC 2.A.1.1) family. Glucose transporter subfamily. As to quaternary structure, interacts with AP2B1. Also able to mediate the transport of dehydroascorbate. Highest level of expression in placenta and testis. Highly expressed in adult and pubertal testis, but not prepubertal testis. Lower levels of expression in brain, liver, heart, kidney, fat and skeletal muscle.

The protein localises to the cell membrane. The protein resides in the cytoplasmic vesicle membrane. It carries out the reaction D-glucose(out) = D-glucose(in). The catalysed reaction is D-fructose(out) = D-fructose(in). The enzyme catalyses L-dehydroascorbate(out) = L-dehydroascorbate(in). It catalyses the reaction alpha,alpha-trehalose(in) = alpha,alpha-trehalose(out). Inhibited by cytochalasin B. Its function is as follows. Insulin-regulated facilitative hexose transporter that mediates the transport of glucose and fructose. Facilitates hepatic influx of dietary trehalose, which in turn inhibits glucose and fructose influx triggering a starvation signal and hepatic autophagy through activation of AMPK and ULK1. Also able to mediate the transport of dehydroascorbate. This chain is Solute carrier family 2, facilitated glucose transporter member 8, found in Mus musculus (Mouse).